The following is a 777-amino-acid chain: 1,4-alpha-glucan branching enzyme GlgB (777 aa).

The active-site Nucleophile is the aspartate 408. Glutamate 461 functions as the Proton donor in the catalytic mechanism.

It belongs to the glycosyl hydrolase 13 family. GlgB subfamily. As to quaternary structure, monomer.

It catalyses the reaction Transfers a segment of a (1-&gt;4)-alpha-D-glucan chain to a primary hydroxy group in a similar glucan chain.. It functions in the pathway glycan biosynthesis; glycogen biosynthesis. Catalyzes the formation of the alpha-1,6-glucosidic linkages in glycogen by scission of a 1,4-alpha-linked oligosaccharide from growing alpha-1,4-glucan chains and the subsequent attachment of the oligosaccharide to the alpha-1,6 position. The sequence is that of 1,4-alpha-glucan branching enzyme GlgB from Actinobacillus pleuropneumoniae serotype 5b (strain L20).